The sequence spans 363 residues: Dual-specificity RNA methyltransferase RlmN (363 aa).

The active-site Proton acceptor is Glu102. The region spanning 108-349 (EKKRATLCVS…KNRGQDIGAA (242 aa)) is the Radical SAM core domain. Cys115 and Cys350 are oxidised to a cystine. Residues Cys122, Cys126, and Cys129 each coordinate [4Fe-4S] cluster. Residues 174–175 (GE), Ser206, 228–230 (SLH), and Asn307 each bind S-adenosyl-L-methionine. Cys350 (S-methylcysteine intermediate) is an active-site residue.

This sequence belongs to the radical SAM superfamily. RlmN family. It depends on [4Fe-4S] cluster as a cofactor.

It is found in the cytoplasm. It catalyses the reaction adenosine(2503) in 23S rRNA + 2 reduced [2Fe-2S]-[ferredoxin] + 2 S-adenosyl-L-methionine = 2-methyladenosine(2503) in 23S rRNA + 5'-deoxyadenosine + L-methionine + 2 oxidized [2Fe-2S]-[ferredoxin] + S-adenosyl-L-homocysteine. The catalysed reaction is adenosine(37) in tRNA + 2 reduced [2Fe-2S]-[ferredoxin] + 2 S-adenosyl-L-methionine = 2-methyladenosine(37) in tRNA + 5'-deoxyadenosine + L-methionine + 2 oxidized [2Fe-2S]-[ferredoxin] + S-adenosyl-L-homocysteine. Its function is as follows. Specifically methylates position 2 of adenine 2503 in 23S rRNA and position 2 of adenine 37 in tRNAs. m2A2503 modification seems to play a crucial role in the proofreading step occurring at the peptidyl transferase center and thus would serve to optimize ribosomal fidelity. This is Dual-specificity RNA methyltransferase RlmN from Buchnera aphidicola subsp. Schizaphis graminum (strain Sg).